We begin with the raw amino-acid sequence, 213 residues long: CDP-diacylglycerol--inositol 3-phosphatidyltransferase (213 aa).

Residues 1–5 (MPEEN) lie on the Cytoplasmic side of the membrane. Residues 6 to 26 (IFLFVPNLIGYARIVFAIISF) form a helical membrane-spanning segment. Position 27 (Tyr-27) is a topological domain, lumenal. A helical transmembrane segment spans residues 28–48 (FMPCCPFTASSFYLLSGLLDA). Mg(2+)-binding residues include Asp-47 and Asp-50. The Cytoplasmic portion of the chain corresponds to 49–73 (FDGHAARALNQGTRFGAMLDMLTDR). Gly-51, Arg-55, and Thr-61 together coordinate a CDP-1,2-diacyl-sn-glycerol. Asp-68 and Asp-72 together coordinate Mg(2+). Asp-72 serves as the catalytic Proton acceptor. A helical transmembrane segment spans residues 74–94 (CATMCLLVNLALLYPRATLLF). A topological domain (lumenal) is located at residue Gln-95. The chain crosses the membrane as a helical span at residues 96 to 116 (LSMSLDVASHWLHLHSSVVRG). Residues 117–139 (SESHKMIDLSGNPVLRIYYTSRP) are Cytoplasmic-facing. Residues 140–160 (ALFTLCAGNELFYCLLYLFNF) traverse the membrane as a helical segment. The Lumenal portion of the chain corresponds to 161–174 (SEGPLVGSVGLFRM). Residues 175–195 (GLWVTAPIALLKSVISVIHLI) traverse the membrane as a helical segment. Residues 196–213 (TAARNMAALDAADRAKKK) lie on the Cytoplasmic side of the membrane.

This sequence belongs to the CDP-alcohol phosphatidyltransferase class-I family. Requires Mn(2+) as cofactor. Mg(2+) serves as cofactor.

The protein localises to the endoplasmic reticulum membrane. Its subcellular location is the cell membrane. The catalysed reaction is a CDP-1,2-diacyl-sn-glycerol + myo-inositol = a 1,2-diacyl-sn-glycero-3-phospho-(1D-myo-inositol) + CMP + H(+). Its function is as follows. Catalyzes the biosynthesis of phosphatidylinositol (PtdIns) as well as PtdIns:inositol exchange reaction. May thus act to reduce an excessive cellular PtdIns content. The exchange activity is due to the reverse reaction of PtdIns synthase and is dependent on CMP, which is tightly bound to the enzyme. This chain is CDP-diacylglycerol--inositol 3-phosphatidyltransferase, found in Mus musculus (Mouse).